The sequence spans 308 residues: Vacuolar lysine transporter YPQ1 (308 aa).

At 1 to 12 (MQLVPLELNRST) the chain is on the vacuolar side. The N-linked (GlcNAc...) asparagine glycan is linked to asparagine 9. One can recognise a PQ-loop 1 domain in the interval 10 to 76 (RSTLSGISGS…QHLLSTMIIL (67 aa)). A helical transmembrane segment spans residues 13-33 (LSGISGSISISCWIIVFVPQI). At 34–44 (YENFYRKSSDG) the chain is on the cytoplasmic side. The helical transmembrane segment at 45–65 (LSLLFVVLWLAGDVFNLMGAV) threads the bilayer. At 66 to 68 (MQH) the chain is on the vacuolar side. Residues 69–89 (LLSTMIILAAYYTVADIILLG) form a helical membrane-spanning segment. The Cytoplasmic segment spans residues 90–167 (QCLWYDNEEK…EVNSRNLIKD (78 aa)). The chain crosses the membrane as a helical span at residues 168-188 (IFIVSGVVFVGFISWYVTYCV). N-linked (GlcNAc...) asparagine glycosylation occurs at asparagine 189. Residues 189 to 205 (NYTQPPPVEDPSLPVPE) are Vacuolar-facing. The chain crosses the membrane as a helical span at residues 206–226 (LQINWMAQIFGYLSALLYLGS). The PQ-loop 2 domain occupies 211–274 (MAQIFGYLSA…ISLDWKYLIM (64 aa)). Topologically, residues 227 to 244 (RIPQILLNFKRKSCEGIS) are cytoplasmic. Residues 245–265 (FLFFLFACLGNTTFIFSVIVI) traverse the membrane as a helical segment. Over 266-277 (SLDWKYLIMNAS) the chain is Vacuolar. The N-linked (GlcNAc...) asparagine glycan is linked to asparagine 275. Residues 278-298 (WLVGSIGTLFMDFVIFSQFFI) form a helical membrane-spanning segment. Residues 299–308 (YKRNKKFILN) are Cytoplasmic-facing.

It belongs to the laat-1 family.

The protein localises to the vacuole membrane. Its function is as follows. Amino acid transporter that moves lysine into the vacuole. May also contribute to low affinity arginine import into the vacuole. Has also been suggested to mediate export of cationic amino acids from the vacuole. May function as an amino acid/proton antiporter. In Saccharomyces cerevisiae (strain ATCC 204508 / S288c) (Baker's yeast), this protein is Vacuolar lysine transporter YPQ1 (YPQ1).